The sequence spans 612 residues: Dihydroxy-acid dehydratase (612 aa).

Aspartate 81 serves as a coordination point for Mg(2+). Residue cysteine 122 participates in [2Fe-2S] cluster binding. Mg(2+) contacts are provided by aspartate 123 and lysine 124. Lysine 124 is modified (N6-carboxylysine). [2Fe-2S] cluster is bound at residue cysteine 195. Position 491 (glutamate 491) interacts with Mg(2+). Serine 517 (proton acceptor) is an active-site residue.

The protein belongs to the IlvD/Edd family. As to quaternary structure, homodimer. The cofactor is [2Fe-2S] cluster. Mg(2+) is required as a cofactor.

The enzyme catalyses (2R)-2,3-dihydroxy-3-methylbutanoate = 3-methyl-2-oxobutanoate + H2O. The catalysed reaction is (2R,3R)-2,3-dihydroxy-3-methylpentanoate = (S)-3-methyl-2-oxopentanoate + H2O. The protein operates within amino-acid biosynthesis; L-isoleucine biosynthesis; L-isoleucine from 2-oxobutanoate: step 3/4. Its pathway is amino-acid biosynthesis; L-valine biosynthesis; L-valine from pyruvate: step 3/4. In terms of biological role, functions in the biosynthesis of branched-chain amino acids. Catalyzes the dehydration of (2R,3R)-2,3-dihydroxy-3-methylpentanoate (2,3-dihydroxy-3-methylvalerate) into 2-oxo-3-methylpentanoate (2-oxo-3-methylvalerate) and of (2R)-2,3-dihydroxy-3-methylbutanoate (2,3-dihydroxyisovalerate) into 2-oxo-3-methylbutanoate (2-oxoisovalerate), the penultimate precursor to L-isoleucine and L-valine, respectively. The polypeptide is Dihydroxy-acid dehydratase (Haemophilus influenzae (strain 86-028NP)).